A 242-amino-acid chain; its full sequence is tRNA pseudouridine synthase A (242 aa).

The Nucleophile role is filled by D51. A substrate-binding site is contributed by Y107.

It belongs to the tRNA pseudouridine synthase TruA family. In terms of assembly, homodimer.

It catalyses the reaction uridine(38/39/40) in tRNA = pseudouridine(38/39/40) in tRNA. Functionally, formation of pseudouridine at positions 38, 39 and 40 in the anticodon stem and loop of transfer RNAs. This chain is tRNA pseudouridine synthase A, found in Helicobacter pylori (strain HPAG1).